Consider the following 883-residue polypeptide: Aryl hydrocarbon receptor (883 aa).

Positions 1 to 9 (MSSGANITY) are excised as a propeptide. Residues 1–38 (MSSGANITYASRKRRKPVQKTVKPIPAEGIKSNPSKRH) are disordered. Short sequence motifs (nuclear localization signal) lie at residues 12–15 (RKRR) and 36–41 (KRHRDR). Residues 26–79 (PAEGIKSNPSKRHRDRLNTELDRLASLLPFPQDVINKLDKLSVLRLSVSYLRAK) form the bHLH domain. The DNA-binding stretch occupies residues 37-65 (RHRDRLNTELDRLASLLPFPQDVINKLDK). Required for maintaining the overall integrity of the AHR:ARNT heterodimer and its transcriptional activity regions lie at residues 49–81 (LASL…AKSF), 116–124 (LLQALNGFV), and 260–262 (FAI). A Nuclear export signal motif is present at residues 63 to 71 (LDKLSVLRL). In terms of domain architecture, PAS 1 spans 111–175 (QEGEFLLQAL…AEFQRQLHWA (65 aa)). The region spanning 266-336 (LQPPSILEIR…CAESHIRMIK (71 aa)) is the PAS 2 domain. Positions 342-383 (MTVFRLLAKHSRWRWVQSNARLIYRNGRPDYIIATQRPLTDE) constitute a PAC domain. The segment at 421–449 (LPIRTKSNTSRKDWAPQSTPSKDSFHPSS) is disordered. Polar residues predominate over residues 436-449 (PQSTPSKDSFHPSS).

Homodimer. Heterodimer; efficient DNA binding requires dimerization with another bHLH protein. Interacts with ARNT; the heterodimer ARNT:AHR binds to core DNA sequence 5'-TGCGTG-3' within the dioxin response element (DRE) of target gene promoters and activates their transcription. Binds MYBBP1A. Interacts with coactivators including SRC-1, RIP140 and NOCA7, and with the corepressor SMRT. Interacts with NEDD8 and IVNS1ABP. Interacts with BMAL1. Interacts with HSP90AB1. Interacts with TIPARP; leading to mono-ADP-ribosylation of AHR and subsequent inhibition of AHR. Mono-ADP-ribosylated, leading to inhibit transcription activator activity of AHR.

The protein localises to the cytoplasm. The protein resides in the nucleus. Ligand-activated transcription factor that enables cells to adapt to changing conditions by sensing compounds from the environment, diet, microbiome and cellular metabolism, and which plays important roles in development, immunity and cancer. Upon ligand binding, translocates into the nucleus, where it heterodimerizes with ARNT and induces transcription by binding to xenobiotic response elements (XRE). Regulates a variety of biological processes, including angiogenesis, hematopoiesis, drug and lipid metabolism, cell motility and immune modulation. Xenobiotics can act as ligands: upon xenobiotic-binding, activates the expression of multiple phase I and II xenobiotic chemical metabolizing enzyme genes (such as the CYP1A1 gene). Mediates biochemical and toxic effects of halogenated aromatic hydrocarbons. Next to xenobiotics, natural ligands derived from plants, microbiota, and endogenous metabolism are potent AHR agonists. Tryptophan (Trp) derivatives constitute an important class of endogenous AHR ligands. Acts as a negative regulator of anti-tumor immunity: indoles and kynurenic acid generated by Trp catabolism act as ligand and activate AHR, thereby promoting AHR-driven cancer cell motility and suppressing adaptive immunity. Regulates the circadian clock by inhibiting the basal and circadian expression of the core circadian component PER1. Inhibits PER1 by repressing the CLOCK-BMAL1 heterodimer mediated transcriptional activation of PER1. The heterodimer ARNT:AHR binds to core DNA sequence 5'-TGCGTG-3' within the dioxin response element (DRE) of target gene promoters and activates their transcription. This chain is Aryl hydrocarbon receptor (Ahr), found in Mus musculus molossinus (Japanese house mouse).